We begin with the raw amino-acid sequence, 991 residues long: Integrator complex subunit 10-like protein (991 aa).

Disordered stretches follow at residues 180-217 (NNNN…NNNN), 310-345 (YFDE…DIEK), 462-484 (NDYF…SQES), 549-614 (NSSS…GQQP), and 961-991 (EKQY…EMNE). Low complexity predominate over residues 319–333 (KQQQQQQQQQQQQEQ). The segment covering 473–484 (GGDENDENSQES) has biased composition (acidic residues). Positions 549–609 (NSSSGSNGII…NNNNNNNNNN (61 aa)) are enriched in low complexity. Positions 964-991 (YSSSNTANNSGVNNSPIHNQNTDVEMNE) are enriched in polar residues.

The protein localises to the nucleus. In terms of biological role, may be a component of the Integrator complex, a complex involved in the small nuclear RNAs (snRNA) U1 and U2 transcription and in their 3'-box-dependent processing. In Dictyostelium discoideum (Social amoeba), this protein is Integrator complex subunit 10-like protein.